The primary structure comprises 198 residues: Probable chorismate pyruvate-lyase (198 aa).

Positions 76, 114, and 172 each coordinate substrate.

It belongs to the UbiC family.

The protein resides in the cytoplasm. It carries out the reaction chorismate = 4-hydroxybenzoate + pyruvate. The protein operates within cofactor biosynthesis; ubiquinone biosynthesis. Functionally, removes the pyruvyl group from chorismate, with concomitant aromatization of the ring, to provide 4-hydroxybenzoate (4HB) for the ubiquinone pathway. This is Probable chorismate pyruvate-lyase from Bordetella avium (strain 197N).